Consider the following 209-residue polypeptide: rRNA N(6)-adenosine-methyltransferase METTL5 (209 aa).

S-adenosyl-L-methionine is bound by residues Gln-28, Thr-31, Gly-59, Cys-62, Val-64, Asp-81, and 108–109 (DV).

It belongs to the methyltransferase superfamily. PrmA family. Heterodimer; heterodimerizes with TRMT112. In terms of tissue distribution, expressed from very early development (8 post-conceptual weeks) and expression persists through adulthood in multiple substructures of the brain, including the cerebellar cortex, hippocampus, and striatum.

Its subcellular location is the nucleus. The protein localises to the presynapse. It is found in the postsynapse. It catalyses the reaction adenosine(1832) in 18S rRNA + S-adenosyl-L-methionine = N(6)-methyladenosine(1832) in 18S rRNA + S-adenosyl-L-homocysteine + H(+). RRNA N6-adenosine-methyltransferase activity is inhibited by zinc. In terms of biological role, catalytic subunit of a heterodimer with TRMT112, which specifically methylates the 6th position of adenine in position 1832 of 18S rRNA. N6-methylation of adenine(1832) in 18S rRNA resides in the decoding center of 18S rRNA and is required for translation and embryonic stem cells (ESCs) pluripotency and differentiation. This Homo sapiens (Human) protein is rRNA N(6)-adenosine-methyltransferase METTL5.